Consider the following 954-residue polypeptide: Valine--tRNA ligase (954 aa).

Positions 48–58 (PNVTGSLHMGH) match the 'HIGH' region motif. Residues 560–564 (KMSKS) carry the 'KMSKS' region motif. Lysine 563 lines the ATP pocket. A coiled-coil region spans residues 886-954 (INKDTELARL…RAQYLSIENL (69 aa)).

Belongs to the class-I aminoacyl-tRNA synthetase family. ValS type 1 subfamily. Monomer.

It localises to the cytoplasm. The enzyme catalyses tRNA(Val) + L-valine + ATP = L-valyl-tRNA(Val) + AMP + diphosphate. In terms of biological role, catalyzes the attachment of valine to tRNA(Val). As ValRS can inadvertently accommodate and process structurally similar amino acids such as threonine, to avoid such errors, it has a 'posttransfer' editing activity that hydrolyzes mischarged Thr-tRNA(Val) in a tRNA-dependent manner. The polypeptide is Valine--tRNA ligase (Mannheimia succiniciproducens (strain KCTC 0769BP / MBEL55E)).